Here is a 151-residue protein sequence, read N- to C-terminus: SsrA-binding protein (151 aa).

This sequence belongs to the SmpB family.

It is found in the cytoplasm. Its function is as follows. Required for rescue of stalled ribosomes mediated by trans-translation. Binds to transfer-messenger RNA (tmRNA), required for stable association of tmRNA with ribosomes. tmRNA and SmpB together mimic tRNA shape, replacing the anticodon stem-loop with SmpB. tmRNA is encoded by the ssrA gene; the 2 termini fold to resemble tRNA(Ala) and it encodes a 'tag peptide', a short internal open reading frame. During trans-translation Ala-aminoacylated tmRNA acts like a tRNA, entering the A-site of stalled ribosomes, displacing the stalled mRNA. The ribosome then switches to translate the ORF on the tmRNA; the nascent peptide is terminated with the 'tag peptide' encoded by the tmRNA and targeted for degradation. The ribosome is freed to recommence translation, which seems to be the essential function of trans-translation. This Campylobacter fetus subsp. fetus (strain 82-40) protein is SsrA-binding protein.